We begin with the raw amino-acid sequence, 106 residues long: Movement protein TGB2 (106 aa).

Over 1–8 (MPLTPPPD) the chain is Cytoplasmic. A helical transmembrane segment spans residues 9-29 (YTRVYTALAIGASIAFFTGLI). At 30–73 (TRNTLPSVGDLQHNLPHGGRYRDGTKSVEYCGPRKLNSVESGSR) the chain is on the lumenal side. Residues 74-94 (WTFQPWLLVIVLVALIIALGR) form a helical membrane-spanning segment. The Cytoplasmic segment spans residues 95–106 (QGHNCRACGRSH).

The protein belongs to the Tymovirales TGBp2 protein family.

It localises to the host endoplasmic reticulum membrane. Its function is as follows. Plays a role in viral cell-to-cell propagation, by facilitating genome transport to neighboring plant cells through plasmosdesmata,. The polypeptide is Movement protein TGB2 (Lilium (LSV)).